The sequence spans 247 residues: 2,3-bisphosphoglycerate-dependent phosphoglycerate mutase (247 aa).

Residues 8 to 15 (RHGESQWN), 21 to 22 (TG), Arg-60, 87 to 90 (ERHY), Lys-98, 114 to 115 (RR), and 183 to 184 (GN) each bind substrate. The Tele-phosphohistidine intermediate role is filled by His-9. Residue Glu-87 is the Proton donor/acceptor of the active site.

This sequence belongs to the phosphoglycerate mutase family. BPG-dependent PGAM subfamily.

It carries out the reaction (2R)-2-phosphoglycerate = (2R)-3-phosphoglycerate. The protein operates within carbohydrate degradation; glycolysis; pyruvate from D-glyceraldehyde 3-phosphate: step 3/5. Catalyzes the interconversion of 2-phosphoglycerate and 3-phosphoglycerate. This chain is 2,3-bisphosphoglycerate-dependent phosphoglycerate mutase, found in Chlorobium phaeobacteroides (strain BS1).